A 130-amino-acid chain; its full sequence is Holo-[acyl-carrier-protein] synthase (130 aa).

Mg(2+) is bound by residues Asp-9 and Glu-58.

It belongs to the P-Pant transferase superfamily. AcpS family. Mg(2+) is required as a cofactor.

The protein resides in the cytoplasm. The catalysed reaction is apo-[ACP] + CoA = holo-[ACP] + adenosine 3',5'-bisphosphate + H(+). Its function is as follows. Transfers the 4'-phosphopantetheine moiety from coenzyme A to a Ser of acyl-carrier-protein. The polypeptide is Holo-[acyl-carrier-protein] synthase (Mycobacterium bovis (strain ATCC BAA-935 / AF2122/97)).